The sequence spans 190 residues: Potassium-transporting ATPase KdpC subunit (190 aa).

The chain crosses the membrane as a helical span at residues 10–30 (TFLFLLLITGGVYPLLTTALG).

It belongs to the KdpC family. In terms of assembly, the system is composed of three essential subunits: KdpA, KdpB and KdpC.

The protein resides in the cell inner membrane. Part of the high-affinity ATP-driven potassium transport (or Kdp) system, which catalyzes the hydrolysis of ATP coupled with the electrogenic transport of potassium into the cytoplasm. This subunit acts as a catalytic chaperone that increases the ATP-binding affinity of the ATP-hydrolyzing subunit KdpB by the formation of a transient KdpB/KdpC/ATP ternary complex. The chain is Potassium-transporting ATPase KdpC subunit from Escherichia fergusonii (strain ATCC 35469 / DSM 13698 / CCUG 18766 / IAM 14443 / JCM 21226 / LMG 7866 / NBRC 102419 / NCTC 12128 / CDC 0568-73).